A 507-amino-acid polypeptide reads, in one-letter code: MAEEQARHVKNGLECIRALKAEPIGSLAIEEAMAAWSEISDNPGQERATCREEKAGSSGLSKPCLSAIGSTEGGAPRIRGQGPGESDDDAETLGIPPRNLQASSTGLQCHYVYDHSGEAVKGIQDADSIMVQSGLDGDSTLSGGDNESENSDVDIGEPDTEGYAITDRGSAPISMGFRASDVETAEGGEIHELLRLQSRGNNFPKLGKTLNVPPPPDPGRASTSGTPIKKGTDARLASFGTEIASSLTGGATQCARKSPSEPSGPGAPAGNVPECVSNAALIQEWTPESGTTISPRSQNNEEGGDHYDDELFSDVQDIKTALAKIHEDNQKIISKLESLLLLKGEVESIKKQINRQNISISTLEGHLSSIMIAIPGLGKDPNDPTADVEINPDLKPIIGRDSGRALAEVLKKPVASRQLQGMTNGRTSSRGQLLKEFQLKPIGKKMSSAVGFVPDTGPASRSVIRSIIKSSRLEEDRKRYLMTLLDDIKGANDLAKFHQMLMKIIMK.

The interaction with N0 stretch occupies residues 1–48; sequence MAEEQARHVKNGLECIRALKAEPIGSLAIEEAMAAWSEISDNPGQERA. Disordered stretches follow at residues 40–100, 134–163, 201–232, 250–273, and 285–309; these read SDNP…PRNL, GLDG…TEGY, NNFP…KKGT, GATQ…GNVP, and WTPE…HYDD. Phosphoserine is present on Ser-86. The segment covering 134 to 145 has biased composition (low complexity); sequence GLDGDSTLSGGD. Acidic residues predominate over residues 146 to 160; that stretch reads NESENSDVDIGEPDT. Ser-151 carries the post-translational modification Phosphoserine. Low complexity predominate over residues 260 to 270; that stretch reads SEPSGPGAPAG. Residues 286-301 show a composition bias toward polar residues; the sequence is TPESGTTISPRSQNNE. The interval 304 to 376 is multimerization; sequence GDHYDDELFS…LSSIMIAIPG (73 aa). Residue Asp-314 participates in Ca(2+) binding. Interaction with the L polymerase stretches follow at residues 361-377 and 396-410; these read STLE…IPGL and PIIG…AEVL. The tract at residues 457–507 is x domain (XD); the sequence is GPASRSVIRSIIKSSRLEEDRKRYLMTLLDDIKGANDLAKFHQMLMKIIMK. The tract at residues 459-507 is interaction with the nucleocapsid (N-RNA); sequence ASRSVIRSIIKSSRLEEDRKRYLMTLLDDIKGANDLAKFHQMLMKIIMK.

Belongs to the morbillivirus P protein family. Homotetramer. Interacts (via multimerization domain and XD domain) with polymerase L; this interaction forms the polymerase L-P complex. Interacts (via N-terminus) with N0 (via Ncore); this interaction allows P to chaperon N0 to avoid N polymerization and non-specific RNA binding before encapsidation. Interacts (via C-terminus) with N-RNA template (via Ntail); this interaction maintains the P/L complex anchored to the nucleocapsid template during the sequential transcription. Interacts (via C-terminus) with protein C this interaction allows C to associate with the ribonucleocapsid. In terms of processing, phosphorylation on serines by host CK2 is necessary for the formation of viral factories.

Essential cofactor of the RNA polymerase L that plays a central role in the transcription and replication by forming the polymerase complex with RNA polymerase L and recruiting L to the genomic N-RNA template for RNA synthesis. Also plays a central role in the encapsidation of nascent RNA chains by forming the encapsidation complex with the nucleocapsid protein N (N-P complex). Acts as a chaperone for newly synthesized free N protein, so-called N0, allowing encapsidation of nascent RNA chains during replication. The nucleoprotein protein N prevents excessive phosphorylation of P, which leads to down-regulation of viral transcription/ replication. Participates, together with N, in the formation of viral factories (viroplasms), which are large inclusions in the host cytoplasm where replication takes place. The sequence is that of Phosphoprotein (P/V) from Measles virus (strain Edmonston B) (MeV).